The sequence spans 921 residues: Probable glucan 1,3-alpha-glucosidase (921 aa).

Residues 1 to 20 form the signal peptide; sequence MRSLLFVLSLICFCSQTALS. The Nucleophile role is filled by Asp-512. Residue Glu-515 is part of the active site. Residue Asp-588 is the Proton donor of the active site. 2 N-linked (GlcNAc...) asparagine glycosylation sites follow: Asn-689 and Asn-804.

It belongs to the glycosyl hydrolase 31 family. Heterodimer of a catalytic alpha subunit (PSL5) and a beta subunit (PSL4). As to expression, expressed in roots, rosette leaves, leaf blades, mature stems, cauline leaves, flower buds, flowers and siliques.

The protein resides in the endoplasmic reticulum. The catalysed reaction is Hydrolysis of terminal (1-&gt;3)-alpha-D-glucosidic links in (1-&gt;3)-alpha-D-glucans.. The protein operates within glycan metabolism; N-glycan metabolism. Its function is as follows. Cleaves sequentially the 2 innermost alpha-1,3-linked glucose residues from the Glc(2)Man(9)GlcNAc(2) oligosaccharide precursor of immature glycoproteins. Essential for stable accumulation of the receptor EFR that determines the specific perception of bacterial elongation factor Tu (EF-Tu), a potent elicitor of the defense response to pathogen-associated molecular patterns (PAMPs). Required for sustained activation of EFR-mediated signaling, but not receptor FLS2-mediated signaling elicited by the bacterial flagellin flg22. This Arabidopsis thaliana (Mouse-ear cress) protein is Probable glucan 1,3-alpha-glucosidase (PSL5).